Consider the following 313-residue polypeptide: MMIWIITISILVSLSSNSWFIFWLMMEINMMSFIPIMNDFKMKNYNSMITYFIIQSFSSSLFFISSFQYSLFNMELFFSLINISVLIKLGMIPFHFWLIMISESLTFYSLLILLTIQKIIPLLIIEKFMNSLMIPLFIMSSLLASIMAMKYKLIKQILIFSSISHQGWILCLIAKKMNFWVSYLMLYSIIIYSIIINCKEMNFNKLCDLTKKKISSKMKNTMIMSMMSLAGMPPFIGFFMKIMAIFFLMKMNLIFMMILIISSLINLFFYLRILTPLFFINSKFSIWSFNNMKSNFMIKINMLLLIILINIFF.

Transmembrane regions (helical) follow at residues 3–23, 47–67, 81–101, 105–125, 128–148, 153–173, 177–197, 220–240, 253–275, and 293–313; these read IWII…FIFW, SMIT…ISSF, INIS…LIMI, LTFY…LLII, FMNS…SIMA, LIKQ…LCLI, MNFW…IIIN, NTMI…GFFM, LIFM…RILT, and KSNF…NIFF.

The protein belongs to the complex I subunit 2 family.

The protein localises to the mitochondrion inner membrane. The enzyme catalyses a ubiquinone + NADH + 5 H(+)(in) = a ubiquinol + NAD(+) + 4 H(+)(out). In terms of biological role, core subunit of the mitochondrial membrane respiratory chain NADH dehydrogenase (Complex I) that is believed to belong to the minimal assembly required for catalysis. Complex I functions in the transfer of electrons from NADH to the respiratory chain. The immediate electron acceptor for the enzyme is believed to be ubiquinone. This Rhipicephalus sanguineus (Brown dog tick) protein is NADH-ubiquinone oxidoreductase chain 2 (ND2).